The sequence spans 321 residues: Lipoyl synthase (321 aa).

Residues Cys-68, Cys-73, Cys-79, Cys-94, Cys-98, Cys-101, and Ser-308 each coordinate [4Fe-4S] cluster. Positions 80–297 constitute a Radical SAM core domain; the sequence is FNHGTATFMI…KEIALELGFT (218 aa).

This sequence belongs to the radical SAM superfamily. Lipoyl synthase family. [4Fe-4S] cluster is required as a cofactor.

It is found in the cytoplasm. The catalysed reaction is [[Fe-S] cluster scaffold protein carrying a second [4Fe-4S](2+) cluster] + N(6)-octanoyl-L-lysyl-[protein] + 2 oxidized [2Fe-2S]-[ferredoxin] + 2 S-adenosyl-L-methionine + 4 H(+) = [[Fe-S] cluster scaffold protein] + N(6)-[(R)-dihydrolipoyl]-L-lysyl-[protein] + 4 Fe(3+) + 2 hydrogen sulfide + 2 5'-deoxyadenosine + 2 L-methionine + 2 reduced [2Fe-2S]-[ferredoxin]. Its pathway is protein modification; protein lipoylation via endogenous pathway; protein N(6)-(lipoyl)lysine from octanoyl-[acyl-carrier-protein]: step 2/2. Its function is as follows. Catalyzes the radical-mediated insertion of two sulfur atoms into the C-6 and C-8 positions of the octanoyl moiety bound to the lipoyl domains of lipoate-dependent enzymes, thereby converting the octanoylated domains into lipoylated derivatives. The sequence is that of Lipoyl synthase from Aliivibrio fischeri (strain ATCC 700601 / ES114) (Vibrio fischeri).